Consider the following 527-residue polypeptide: Low-affinity Na(+)/H(+) antiporter NhaS1 (527 aa).

Transmembrane regions (helical) follow at residues 18–38, 41–61, 94–114, 126–146, 169–189, 196–216, 240–260, 276–296, 311–331, 352–372, and 380–400; these read FLIV…VPIL, IPYT…DVKL, WFPI…GIAF, IAFL…IALF, VAVV…TFDL, FVTV…SLSL, ILAE…GMVL, IVSI…FLLI, LILI…FGLS, TVLW…LSVP, and AIID…GLTT.

It belongs to the monovalent cation:proton antiporter 1 (CPA1) transporter (TC 2.A.36) family.

Its subcellular location is the cell membrane. Its function is as follows. Na(+)/H(+) antiporter that extrudes sodium in exchange for external protons. Might be able to function at relatively high concentrations of Na(+) ions. Also has Li(+)/H(+) antiport activity under K(+)-rich conditions, but it might not have any physiological relevance. The chain is Low-affinity Na(+)/H(+) antiporter NhaS1 (nhaS1) from Synechocystis sp. (strain ATCC 27184 / PCC 6803 / Kazusa).